The chain runs to 469 residues: DENN domain-containing protein 2D (469 aa).

The tract at residues 17-44 is disordered; that stretch reads LPRLRAGQSQNNPGEAVTEPERIQEHSP. The 150-residue stretch at 55 to 204 folds into the uDENN domain; it reads EYLLVVSLKK…AFPAPGKTVT (150 aa). Residues 226–359 enclose the cDENN domain; it reads HLEHVDFSVL…LQDDILDSLG (134 aa). A dDENN domain is found at 361–445; the sequence is GINELKTSEQ…QEAEKSRNPP (85 aa).

The protein localises to the cytoplasm. Functionally, guanine nucleotide exchange factor (GEF) which may activate RAB9A and RAB9B. Promotes the exchange of GDP to GTP, converting inactive GDP-bound Rab proteins into their active GTP-bound form. This chain is DENN domain-containing protein 2D (Dennd2d), found in Mus musculus (Mouse).